A 521-amino-acid polypeptide reads, in one-letter code: GMP synthase [glutamine-hydrolyzing] (521 aa).

Residues 5–197 form the Glutamine amidotransferase type-1 domain; it reads KILILDFGSQ…VLDICGAQPG (193 aa). Catalysis depends on Cys81, which acts as the Nucleophile. Catalysis depends on residues His171 and Glu173. The GMPS ATP-PPase domain occupies 198–390; the sequence is WTMPNYIEEA…LGLPREMVYR (193 aa). Residue 225–231 participates in ATP binding; that stretch reads SGGVDSS.

In terms of assembly, homodimer.

The catalysed reaction is XMP + L-glutamine + ATP + H2O = GMP + L-glutamate + AMP + diphosphate + 2 H(+). The protein operates within purine metabolism; GMP biosynthesis; GMP from XMP (L-Gln route): step 1/1. Its function is as follows. Catalyzes the synthesis of GMP from XMP. This Neisseria meningitidis serogroup C (strain 053442) protein is GMP synthase [glutamine-hydrolyzing].